Reading from the N-terminus, the 534-residue chain is CTP synthase (534 aa).

The tract at residues 1–269 is amidoligase domain; the sequence is MHVSNSKFIF…DKIIIDAFRL (269 aa). Ser-17 serves as a coordination point for CTP. Ser-17 is a UTP binding site. An ATP-binding site is contributed by 18-23; it reads SLGKGV. Tyr-58 lines the L-glutamine pocket. An ATP-binding site is contributed by Asp-75. Positions 75 and 143 each coordinate Mg(2+). Residues 150–152, 190–195, and Lys-226 contribute to the CTP site; these read DIE and KTKPTQ. Residues 190–195 and Lys-226 each bind UTP; that span reads KTKPTQ. In terms of domain architecture, Glutamine amidotransferase type-1 spans 294 to 532; the sequence is DIAIVGKYIK…IENAYIYKKE (239 aa). Gly-352 contacts L-glutamine. Cys-379 serves as the catalytic Nucleophile; for glutamine hydrolysis. L-glutamine contacts are provided by residues 380 to 383, Glu-403, and Arg-460; that span reads LGMQ. Active-site residues include His-505 and Glu-507.

This sequence belongs to the CTP synthase family. As to quaternary structure, homotetramer.

The catalysed reaction is UTP + L-glutamine + ATP + H2O = CTP + L-glutamate + ADP + phosphate + 2 H(+). It carries out the reaction L-glutamine + H2O = L-glutamate + NH4(+). The enzyme catalyses UTP + NH4(+) + ATP = CTP + ADP + phosphate + 2 H(+). It functions in the pathway pyrimidine metabolism; CTP biosynthesis via de novo pathway; CTP from UDP: step 2/2. Allosterically activated by GTP, when glutamine is the substrate; GTP has no effect on the reaction when ammonia is the substrate. The allosteric effector GTP functions by stabilizing the protein conformation that binds the tetrahedral intermediate(s) formed during glutamine hydrolysis. Inhibited by the product CTP, via allosteric rather than competitive inhibition. Functionally, catalyzes the ATP-dependent amination of UTP to CTP with either L-glutamine or ammonia as the source of nitrogen. Regulates intracellular CTP levels through interactions with the four ribonucleotide triphosphates. In Hydrogenobaculum sp. (strain Y04AAS1), this protein is CTP synthase.